Here is a 312-residue protein sequence, read N- to C-terminus: Methionyl-tRNA formyltransferase (312 aa).

Residue 109–112 (SLLP) coordinates (6S)-5,6,7,8-tetrahydrofolate.

This sequence belongs to the Fmt family.

It carries out the reaction L-methionyl-tRNA(fMet) + (6R)-10-formyltetrahydrofolate = N-formyl-L-methionyl-tRNA(fMet) + (6S)-5,6,7,8-tetrahydrofolate + H(+). In terms of biological role, attaches a formyl group to the free amino group of methionyl-tRNA(fMet). The formyl group appears to play a dual role in the initiator identity of N-formylmethionyl-tRNA by promoting its recognition by IF2 and preventing the misappropriation of this tRNA by the elongation apparatus. The protein is Methionyl-tRNA formyltransferase of Listeria welshimeri serovar 6b (strain ATCC 35897 / DSM 20650 / CCUG 15529 / CIP 8149 / NCTC 11857 / SLCC 5334 / V8).